The sequence spans 657 residues: Transcription factor 12 (657 aa).

Over residues Met1–Tyr20 the composition is skewed to polar residues. Disordered regions lie at residues Met1–Ser76, Leu89–Asp285, Pro297–Ser340, Val459–Met555, and Lys628–Met657. Residues His30 to His43 are compositionally biased toward basic and acidic residues. Polar residues-rich tracts occupy residues Thr49–Ser70 and Ala93–Ser112. Residues Leu68–Leu89 are leucine-zipper. The short motif at Lys130 to Pro136 is the Nuclear localization signal element. Polar residues-rich tracts occupy residues Met168–Ser193, Gly202–Ser216, and Val230–Pro254. The segment covering Thr300–Pro311 has biased composition (low complexity). Residues Val312–Ser340 are compositionally biased toward polar residues. 3 stretches are compositionally biased toward basic and acidic residues: residues Ile493–His505, Asp511–Val526, and Pro543–Met555. Residues Glu552–Leu605 form the bHLH domain. The interval Gln607–Ser630 is class A specific domain. Positions Ser648 to Met657 are enriched in polar residues.

In terms of assembly, efficient DNA binding requires dimerization with another bHLH protein. Forms homo- or heterooligomers with myogenin, E12 and ITF2 proteins.

It is found in the nucleus. Functionally, transcriptional regulator. Involved in the initiation of neuronal differentiation. Activates transcription by binding to the E box-containing promoter. This chain is Transcription factor 12 (TCF12), found in Gallus gallus (Chicken).